A 36-amino-acid chain; its full sequence is MAASFLPSILVPLVGLIFPAIAMTSLFIYIEKQEVN.

Residues 9–29 form a helical membrane-spanning segment; the sequence is ILVPLVGLIFPAIAMTSLFIY.

This sequence belongs to the PsaI family.

It localises to the plastid. Its subcellular location is the chloroplast thylakoid membrane. Functionally, may help in the organization of the PsaL subunit. In Tupiella akineta (Green alga), this protein is Photosystem I reaction center subunit VIII.